Consider the following 140-residue polypeptide: Nucleoside diphosphate kinase (140 aa).

Positions 11, 59, 87, 93, 104, and 114 each coordinate ATP. His-117 (pros-phosphohistidine intermediate) is an active-site residue.

This sequence belongs to the NDK family. In terms of assembly, homotetramer. Mg(2+) serves as cofactor.

Its subcellular location is the cytoplasm. It carries out the reaction a 2'-deoxyribonucleoside 5'-diphosphate + ATP = a 2'-deoxyribonucleoside 5'-triphosphate + ADP. The enzyme catalyses a ribonucleoside 5'-diphosphate + ATP = a ribonucleoside 5'-triphosphate + ADP. Its function is as follows. Major role in the synthesis of nucleoside triphosphates other than ATP. The ATP gamma phosphate is transferred to the NDP beta phosphate via a ping-pong mechanism, using a phosphorylated active-site intermediate. The sequence is that of Nucleoside diphosphate kinase from Cereibacter sphaeroides (strain ATCC 17029 / ATH 2.4.9) (Rhodobacter sphaeroides).